Here is a 205-residue protein sequence, read N- to C-terminus: Probable GTP-binding protein EngB (205 aa).

The EngB-type G domain occupies 27 to 201; that stretch reads TGIEIAFAGR…AAKLDFWFSP (175 aa). Residues 35 to 42, 62 to 66, 80 to 83, 147 to 150, and 180 to 182 contribute to the GTP site; these read GRSNAGKS, GRTQL, DLPG, TKAD, and FSA. Ser42 and Thr64 together coordinate Mg(2+).

The protein belongs to the TRAFAC class TrmE-Era-EngA-EngB-Septin-like GTPase superfamily. EngB GTPase family. Mg(2+) is required as a cofactor.

Functionally, necessary for normal cell division and for the maintenance of normal septation. This Haemophilus influenzae (strain PittEE) protein is Probable GTP-binding protein EngB.